The following is a 383-amino-acid chain: Acetylornithine deacetylase (383 aa).

His80 serves as a coordination point for Zn(2+). Asp82 is an active-site residue. Residue Asp112 participates in Zn(2+) binding. Residue Glu144 is part of the active site. Residues Glu145, Glu169, and His355 each contribute to the Zn(2+) site.

It belongs to the peptidase M20A family. ArgE subfamily. Homodimer. Zn(2+) serves as cofactor. The cofactor is Co(2+). Requires glutathione as cofactor.

The protein localises to the cytoplasm. The enzyme catalyses N(2)-acetyl-L-ornithine + H2O = L-ornithine + acetate. It participates in amino-acid biosynthesis; L-arginine biosynthesis; L-ornithine from N(2)-acetyl-L-ornithine (linear): step 1/1. Functionally, catalyzes the hydrolysis of the amide bond of N(2)-acetylated L-amino acids. Cleaves the acetyl group from N-acetyl-L-ornithine to form L-ornithine, an intermediate in L-arginine biosynthesis pathway, and a branchpoint in the synthesis of polyamines. This Pectobacterium atrosepticum (strain SCRI 1043 / ATCC BAA-672) (Erwinia carotovora subsp. atroseptica) protein is Acetylornithine deacetylase.